A 306-amino-acid chain; its full sequence is MHSAHMSNADYIAKKYLRKDQGKKKKKKEKDFVEIQDEDVAGWDDDNSFSLVNRELTSLHDAPTIVANESLKDRDIDAIYQNIEKTTNKPAQLWKAVGNDEVVESEQQDSHDAESIPQFGLLTGKQVTFKAEERRKREEKSSNLDEEELRKSRETVYRDATGRRIDLVLARKEAKRKLKEKEEEARRQKEQQQGVVQVRQQKEYLKELERQKTVPLARYEDDPEYNKELKERSRWNDPAASFLTNKPVSSKATYQGYAPPNRFNIRPGHRWDGIIRGNGFENKWFQRQNERKAQEHEAHMWAIEDM.

Positions 130–152 (KAEERRKREEKSSNLDEEELRKS) are disordered. Residues 130 to 198 (KAEERRKREE…KEQQQGVVQV (69 aa)) are a coiled coil.

Belongs to the CWC26 family. In terms of assembly, belongs to the 40S cdc5-associated complex (or cwf complex), a spliceosome sub-complex reminiscent of a late-stage spliceosome composed of the U2, U5 and U6 snRNAs and at least brr2, cdc5, cwf2/prp3, cwf3/syf1, cwf4/syf3, cwf5/ecm2, spp42/cwf6, cwf7/spf27, cwf8, cwf9, cwf10, cwf11, cwf12, prp45/cwf13, cwf14, cwf15, cwf16, cwf17, cwf18, cwf19, cwf20, cwf21, cwf22, cwf23, cwf24, cwf25, cwf26, cyp7/cwf27, cwf28, cwf29/ist3, lea1, msl1, prp5/cwf1, prp10, prp12/sap130, prp17, prp22, sap61, sap62, sap114, sap145, slu7, smb1, smd1, smd3, smf1, smg1 and syf2.

The protein localises to the cytoplasm. The protein resides in the nucleus. Involved in mRNA splicing. The sequence is that of Pre-mRNA-splicing factor cwf26 (cwf26) from Schizosaccharomyces pombe (strain 972 / ATCC 24843) (Fission yeast).